The sequence spans 203 residues: Holliday junction branch migration complex subunit RuvA (203 aa).

The domain I stretch occupies residues 1–63 (MIAFVSGPVA…EDSLTLYGFV (63 aa)). The interval 64–141 (DDDERQVFEL…GEPLGTGGPA (78 aa)) is domain II. The segment at 141–145 (AIGRA) is flexible linker. The domain III stretch occupies residues 146 to 203 (VTTGWREQLHAALIGLGYATREADEAVAAVAPQAEAAGGTPQVGQLLKAALQTLNRTR).

The protein belongs to the RuvA family. Homotetramer. Forms an RuvA(8)-RuvB(12)-Holliday junction (HJ) complex. HJ DNA is sandwiched between 2 RuvA tetramers; dsDNA enters through RuvA and exits via RuvB. An RuvB hexamer assembles on each DNA strand where it exits the tetramer. Each RuvB hexamer is contacted by two RuvA subunits (via domain III) on 2 adjacent RuvB subunits; this complex drives branch migration. In the full resolvosome a probable DNA-RuvA(4)-RuvB(12)-RuvC(2) complex forms which resolves the HJ.

The protein resides in the cytoplasm. In terms of biological role, the RuvA-RuvB-RuvC complex processes Holliday junction (HJ) DNA during genetic recombination and DNA repair, while the RuvA-RuvB complex plays an important role in the rescue of blocked DNA replication forks via replication fork reversal (RFR). RuvA specifically binds to HJ cruciform DNA, conferring on it an open structure. The RuvB hexamer acts as an ATP-dependent pump, pulling dsDNA into and through the RuvAB complex. HJ branch migration allows RuvC to scan DNA until it finds its consensus sequence, where it cleaves and resolves the cruciform DNA. This chain is Holliday junction branch migration complex subunit RuvA, found in Streptomyces avermitilis (strain ATCC 31267 / DSM 46492 / JCM 5070 / NBRC 14893 / NCIMB 12804 / NRRL 8165 / MA-4680).